The chain runs to 173 residues: Crossover junction endodeoxyribonuclease RuvC (173 aa).

Residues Asp8, Glu67, and Asp139 contribute to the active site. The Mg(2+) site is built by Asp8, Glu67, and Asp139.

It belongs to the RuvC family. Homodimer which binds Holliday junction (HJ) DNA. The HJ becomes 2-fold symmetrical on binding to RuvC with unstacked arms; it has a different conformation from HJ DNA in complex with RuvA. In the full resolvosome a probable DNA-RuvA(4)-RuvB(12)-RuvC(2) complex forms which resolves the HJ. The cofactor is Mg(2+).

It is found in the cytoplasm. The catalysed reaction is Endonucleolytic cleavage at a junction such as a reciprocal single-stranded crossover between two homologous DNA duplexes (Holliday junction).. Functionally, the RuvA-RuvB-RuvC complex processes Holliday junction (HJ) DNA during genetic recombination and DNA repair. Endonuclease that resolves HJ intermediates. Cleaves cruciform DNA by making single-stranded nicks across the HJ at symmetrical positions within the homologous arms, yielding a 5'-phosphate and a 3'-hydroxyl group; requires a central core of homology in the junction. The consensus cleavage sequence is 5'-(A/T)TT(C/G)-3'. Cleavage occurs on the 3'-side of the TT dinucleotide at the point of strand exchange. HJ branch migration catalyzed by RuvA-RuvB allows RuvC to scan DNA until it finds its consensus sequence, where it cleaves and resolves the cruciform DNA. The protein is Crossover junction endodeoxyribonuclease RuvC of Vibrio vulnificus (strain YJ016).